Here is a 231-residue protein sequence, read N- to C-terminus: Putative 3-methyladenine DNA glycosylase (231 aa).

This sequence belongs to the DNA glycosylase MPG family.

This is Putative 3-methyladenine DNA glycosylase from Pseudomonas fluorescens (strain Pf0-1).